Here is a 380-residue protein sequence, read N- to C-terminus: Glycerate kinase (380 aa).

The protein belongs to the glycerate kinase type-1 family.

The enzyme catalyses (R)-glycerate + ATP = (2R)-3-phosphoglycerate + ADP + H(+). The sequence is that of Glycerate kinase (glxK) from Halalkalibacterium halodurans (strain ATCC BAA-125 / DSM 18197 / FERM 7344 / JCM 9153 / C-125) (Bacillus halodurans).